A 398-amino-acid polypeptide reads, in one-letter code: MALLRRPTVSSDLENIDTGVNSKVKSHVTIRRTVLEEIGNRVTTRAAQVAKKAQNTKVPVQPTKTTNVNKQLKPTASVKPVQMEKLAPKGPSPTPEDVSMKEENLCQAFSDALLCKIEDIDNEDWENPQLCSDYVKDIYQYLRQLEVLQSINPHFLDGRDINGRMRAILVDWLVQVHSKFRLLQETLYMCVGIMDRFLQVQPVSRKKLQLVGITALLLASKYEEMFSPNIEDFVYITDNAYTSSQIREMETLILKELKFELGRPLPLHFLRRASKAGEVDVEQHTLAKYLMELTLIDYDMVHYHPSKVAAAASCLSQKVLGQGKWNLKQQYYTGYTENEVLEVMQHMAKNVVKVNENLTKFIAIKNKYASSKLLKISMIPQLNSKAVKDLASPLIGRS.

T8 carries the post-translational modification Phosphothreonine. S11, S77, and S92 each carry phosphoserine. T94 carries the phosphothreonine modification. S99, S392, and S398 each carry phosphoserine.

The protein belongs to the cyclin family. Cyclin AB subfamily. As to quaternary structure, interacts with the CDK1 protein kinase to form a serine/threonine kinase holoenzyme complex also known as maturation promoting factor (MPF). The cyclin subunit imparts substrate specificity to the complex.

In terms of biological role, essential for the control of the cell cycle at the G2/M (mitosis) transition. This chain is G2/mitotic-specific cyclin-B2 (CCNB2), found in Homo sapiens (Human).